The sequence spans 479 residues: UDP-N-acetylmuramate--L-alanine ligase (479 aa).

128–134 is an ATP binding site; sequence GAHGKTT.

The protein belongs to the MurCDEF family.

It localises to the cytoplasm. It carries out the reaction UDP-N-acetyl-alpha-D-muramate + L-alanine + ATP = UDP-N-acetyl-alpha-D-muramoyl-L-alanine + ADP + phosphate + H(+). Its pathway is cell wall biogenesis; peptidoglycan biosynthesis. In terms of biological role, cell wall formation. In Psychrobacter cryohalolentis (strain ATCC BAA-1226 / DSM 17306 / VKM B-2378 / K5), this protein is UDP-N-acetylmuramate--L-alanine ligase.